We begin with the raw amino-acid sequence, 618 residues long: Dihydroxy-acid dehydratase (618 aa).

Residue aspartate 81 participates in Mg(2+) binding. Cysteine 122 provides a ligand contact to [2Fe-2S] cluster. Mg(2+) is bound by residues aspartate 123 and lysine 124. Lysine 124 is subject to N6-carboxylysine. Cysteine 195 is a [2Fe-2S] cluster binding site. Mg(2+) is bound at residue glutamate 490. The active-site Proton acceptor is serine 516.

It belongs to the IlvD/Edd family. As to quaternary structure, homodimer. It depends on [2Fe-2S] cluster as a cofactor. Requires Mg(2+) as cofactor.

The enzyme catalyses (2R)-2,3-dihydroxy-3-methylbutanoate = 3-methyl-2-oxobutanoate + H2O. It carries out the reaction (2R,3R)-2,3-dihydroxy-3-methylpentanoate = (S)-3-methyl-2-oxopentanoate + H2O. It participates in amino-acid biosynthesis; L-isoleucine biosynthesis; L-isoleucine from 2-oxobutanoate: step 3/4. The protein operates within amino-acid biosynthesis; L-valine biosynthesis; L-valine from pyruvate: step 3/4. Functionally, functions in the biosynthesis of branched-chain amino acids. Catalyzes the dehydration of (2R,3R)-2,3-dihydroxy-3-methylpentanoate (2,3-dihydroxy-3-methylvalerate) into 2-oxo-3-methylpentanoate (2-oxo-3-methylvalerate) and of (2R)-2,3-dihydroxy-3-methylbutanoate (2,3-dihydroxyisovalerate) into 2-oxo-3-methylbutanoate (2-oxoisovalerate), the penultimate precursor to L-isoleucine and L-valine, respectively. The sequence is that of Dihydroxy-acid dehydratase from Gluconobacter oxydans (strain 621H) (Gluconobacter suboxydans).